Consider the following 405-residue polypeptide: Nodal homolog 2-A (405 aa).

Positions 1–18 (MASLGVILFFVIASLIHG) are cleaved as a signal peptide. A propeptide spanning residues 19–282 (KPIHSERKAA…RVTDTRRPRR (264 aa)) is cleaved from the precursor. N-linked (GlcNAc...) asparagine glycans are attached at residues Asn71, Asn172, and Asn343. Intrachain disulfides connect Cys305–Cys371, Cys334–Cys402, and Cys338–Cys404.

This sequence belongs to the TGF-beta family. Homodimer; disulfide-linked. Forms heterodimers with the TGF-beta family member derriere. Interacts with tsku; enhances nodal2 activity. In terms of tissue distribution, first localized to the vegetal region of the blastula. Just prior to gastrulation (stage 10), this expression disappears and instead becomes localized to the dorsal marginal zone, with enrichment in the organizer.

It is found in the secreted. Functionally, cooperation and regulatory loops of multiple nodals are essential for mesendoderm patterning in early embryos. Essential for mesoderm formation and axial patterning during embryonic development. Activates the activin-like signaling pathway to induce dorsal and ventral mesoderm in animal cap ectoderm. In addition, also dorsalizes ventral marginal zone (VMZ) tissues during gastrulation. Induces muscle actin. Appears to act as both a short-range and long-range morphogen. The unprocessed protein inhibits bmp- and wnt-signaling. The sequence is that of Nodal homolog 2-A (nodal2-a) from Xenopus laevis (African clawed frog).